We begin with the raw amino-acid sequence, 139 residues long: D-ribose pyranase (139 aa).

Residue His20 is the Proton donor of the active site. Substrate-binding positions include Asp28, His106, and 128-130; that span reads YAN.

Belongs to the RbsD / FucU family. RbsD subfamily. In terms of assembly, homodecamer.

Its subcellular location is the cytoplasm. It catalyses the reaction beta-D-ribopyranose = beta-D-ribofuranose. It functions in the pathway carbohydrate metabolism; D-ribose degradation; D-ribose 5-phosphate from beta-D-ribopyranose: step 1/2. Its function is as follows. Catalyzes the interconversion of beta-pyran and beta-furan forms of D-ribose. In Escherichia coli (strain 55989 / EAEC), this protein is D-ribose pyranase.